Reading from the N-terminus, the 428-residue chain is AP2-like ethylene-responsive transcription factor At2g41710 (428 aa).

Residues 1–10 (MASVSSSDQG) show a composition bias toward polar residues. The segment at 1-28 (MASVSSSDQGPKTEAGCSGGGGGESSET) is disordered. A DNA-binding region (AP2/ERF) is located at residues 70–136 (IYRGVTRHRW…WGPGTLINFP (67 aa)).

It belongs to the AP2/ERF transcription factor family. AP2 subfamily.

It is found in the nucleus. Probably acts as a transcriptional activator. Binds to the GCC-box pathogenesis-related promoter element. May be involved in the regulation of gene expression by stress factors and by components of stress signal transduction pathways. This is AP2-like ethylene-responsive transcription factor At2g41710 from Arabidopsis thaliana (Mouse-ear cress).